A 163-amino-acid polypeptide reads, in one-letter code: Disulfide bond formation protein B (163 aa).

Residues 1-9 lie on the Cytoplasmic side of the membrane; the sequence is MRLASPRSL. Residues 10 to 26 form a helical membrane-spanning segment; sequence FVIAFLGSALLIAIALY. Residues 27–44 are Periplasmic-facing; sequence MEHVMGLAPCPLCIVQRI. Cysteines 36 and 39 form a disulfide. A helical transmembrane segment spans residues 45–61; the sequence is CVIGFGLVCLVAAIHGP. The Cytoplasmic portion of the chain corresponds to 62–67; the sequence is AKVGRR. The helical transmembrane segment at 68 to 85 threads the bilayer; the sequence is VYAAIAALFVAAGAATAI. At 86–142 the chain is on the periplasmic side; the sequence is RQIWLQSVPADQLPSCLPSLEYMMEALPFQEIARLVLHGTAECAEVSWTMLGMSIPE. A disulfide bridge connects residues Cys-101 and Cys-128. The helical transmembrane segment at 143 to 161 threads the bilayer; the sequence is WSLLGFIGMAIVCLWQLLR. Over 162 to 163 the chain is Cytoplasmic; the sequence is RD.

It belongs to the DsbB family.

It localises to the cell inner membrane. Its function is as follows. Required for disulfide bond formation in some periplasmic proteins. Acts by oxidizing the DsbA protein. The protein is Disulfide bond formation protein B of Stutzerimonas stutzeri (strain A1501) (Pseudomonas stutzeri).